The primary structure comprises 689 residues: Small ribosomal subunit protein mS39 (689 aa).

The N-terminal 37 residues, Met1–Tyr37, are a transit peptide targeting the mitochondrion. Lys126 is modified (N6-acetyllysine). PPR repeat units lie at residues Ile149–Val183, Ser184–Glu219, Asn255–Ala289, Asp290–Pro330, Asn331–Pro367, Ser368–Asp409, Asp412–Lys446, Arg454–Pro488, His489–Phe523, and Pro572–Pro606. A disordered region spans residues Asn665 to Lys689. Over residues Ser673–Lys689 the composition is skewed to acidic residues.

It belongs to the mitochondrion-specific ribosomal protein mS39 family. In terms of assembly, component of the mitochondrial small ribosomal subunit (mt-SSU). Mature mammalian 55S mitochondrial ribosomes consist of a small (28S) and a large (39S) subunit. The 28S small subunit contains a 12S ribosomal RNA (12S mt-rRNA) and 30 different proteins. The 39S large subunit contains a 16S rRNA (16S mt-rRNA), a copy of mitochondrial valine transfer RNA (mt-tRNA(Val)), which plays an integral structural role, and 52 different proteins. Associated with the 12S mitochondrial rRNA (12S mt-rRNA). As to expression, abundant in testes, skeletal muscle and heart tissue.

The protein resides in the mitochondrion. Functionally, mitochondrial RNA-binding protein that has a role in mitochondrial translation. The sequence is that of Small ribosomal subunit protein mS39 (PTCD3) from Homo sapiens (Human).